We begin with the raw amino-acid sequence, 137 residues long: ATP synthase epsilon chain (137 aa).

The protein belongs to the ATPase epsilon chain family. In terms of assembly, F-type ATPases have 2 components, CF(1) - the catalytic core - and CF(0) - the membrane proton channel. CF(1) has five subunits: alpha(3), beta(3), gamma(1), delta(1), epsilon(1). CF(0) has three main subunits: a, b and c.

It localises to the cellular thylakoid membrane. Its function is as follows. Produces ATP from ADP in the presence of a proton gradient across the membrane. This chain is ATP synthase epsilon chain, found in Synechococcus sp. (strain JA-2-3B'a(2-13)) (Cyanobacteria bacterium Yellowstone B-Prime).